The following is a 256-amino-acid chain: MAFNGIALLITATIFIGSCYANYCDSSLCRQGPHVACNAPQQFGPACGNNRKFVPMDSKLKTIILNTHNKLRAEIANGKHGFPQAARMPTLVWDDELAHIASFNARKCIFAHDKCRNTRQFKFSGQNLAITTFYGFNFQAGDRAENFTQEWFNEHKDCPKSYVDAYPSSHRGPQIGHFTQLVNDRTWKVGCSMMHYITNGKMINYYLVCNYTMTNMIGEPIYTKGRTGSKCETGQNPQFKGLCSPRERVKSESYNG.

The N-terminal stretch at 1–21 (MAFNGIALLITATIFIGSCYA) is a signal peptide. The region spanning 65 to 211 (LNTHNKLRAE…MINYYLVCNY (147 aa)) is the SCP domain. 2 N-linked (GlcNAc...) asparagine glycosylation sites follow: Asn146 and Asn210.

Belongs to the CRISP family.

It localises to the secreted. Functionally, activates autophagy in human monocytic cells, dendritic cells and macrophages. Its function is as follows. (Microbial infection) Promotes Zika virus replication in human dendritic cells and macrophages. Facilitates Zika virus transmission from infected mosquitoes to the host in mouse model. In Aedes albopictus (Asian tiger mosquito), this protein is Venom allergen-1.